Here is a 186-residue protein sequence, read N- to C-terminus: Ribosome-recycling factor (186 aa).

This sequence belongs to the RRF family.

Its subcellular location is the cytoplasm. In terms of biological role, responsible for the release of ribosomes from messenger RNA at the termination of protein biosynthesis. May increase the efficiency of translation by recycling ribosomes from one round of translation to another. This Paraburkholderia phymatum (strain DSM 17167 / CIP 108236 / LMG 21445 / STM815) (Burkholderia phymatum) protein is Ribosome-recycling factor.